Here is a 118-residue protein sequence, read N- to C-terminus: Large ribosomal subunit protein bL19 (118 aa).

This sequence belongs to the bacterial ribosomal protein bL19 family.

This protein is located at the 30S-50S ribosomal subunit interface and may play a role in the structure and function of the aminoacyl-tRNA binding site. The polypeptide is Large ribosomal subunit protein bL19 (Dictyoglomus thermophilum (strain ATCC 35947 / DSM 3960 / H-6-12)).